Reading from the N-terminus, the 361-residue chain is Probable galacturonosyltransferase-like 7 (361 aa).

A helical; Signal-anchor for type II membrane protein membrane pass occupies residues 1-21; sequence MLWIMRFSGLFSAALVIIVLS. Over 22–361 the chain is Lumenal; the sequence is PSLQSFPPAE…PYDLYGHYSR (340 aa). The N-linked (GlcNAc...) asparagine glycan is linked to asparagine 217.

This sequence belongs to the glycosyltransferase 8 family.

The protein resides in the golgi apparatus membrane. It functions in the pathway glycan metabolism; pectin biosynthesis. Functionally, may be involved in pectin and/or xylans biosynthesis in cell walls. This chain is Probable galacturonosyltransferase-like 7 (GATL7), found in Arabidopsis thaliana (Mouse-ear cress).